Here is a 367-residue protein sequence, read N- to C-terminus: MSIDVTDYRDIFLNDRPLMDARAPVEFHKGAFPGAVNLPLMNDIERQRVGTCYKHHGQQAAIELGHQLVSGPVKEERIQAWAEFARTHPEGYLYCFRGGLRSQIVQQWLKSEAGVDYPRIGGGYKALRGFLIDTLESALTDCDFVLLGGMTGTGKTEVLAQLRNSVDLEGHANHRGSSFGKRATGQPSNIDFENRLAIDLLKKRAAGIDQFVLEDESRVVGSCALPLPLYQGMQQYPMVWLEDRFEQRVERILRDYVVDLSAEFQAVHGEEGFGRFCERLLESLDNVHKRLGGERHRRMRVLMEEALAEQGRSGAVELHRAWIEGLLREYYDPMYVFQREKKGGRIEFAGERQAVIEYLRQRGKSQA.

The Rhodanese domain maps to Phe-12 to Glu-136. Catalysis depends on Cys-95, which acts as the S-selanylcysteine intermediate.

It belongs to the SelU family. In terms of assembly, monomer.

The enzyme catalyses 5-methylaminomethyl-2-thiouridine(34) in tRNA + selenophosphate + (2E)-geranyl diphosphate + H2O + H(+) = 5-methylaminomethyl-2-selenouridine(34) in tRNA + (2E)-thiogeraniol + phosphate + diphosphate. It catalyses the reaction 5-methylaminomethyl-2-thiouridine(34) in tRNA + (2E)-geranyl diphosphate = 5-methylaminomethyl-S-(2E)-geranyl-thiouridine(34) in tRNA + diphosphate. It carries out the reaction 5-methylaminomethyl-S-(2E)-geranyl-thiouridine(34) in tRNA + selenophosphate + H(+) = 5-methylaminomethyl-2-(Se-phospho)selenouridine(34) in tRNA + (2E)-thiogeraniol. The catalysed reaction is 5-methylaminomethyl-2-(Se-phospho)selenouridine(34) in tRNA + H2O = 5-methylaminomethyl-2-selenouridine(34) in tRNA + phosphate. In terms of biological role, involved in the post-transcriptional modification of the uridine at the wobble position (U34) of tRNA(Lys), tRNA(Glu) and tRNA(Gln). Catalyzes the conversion of 2-thiouridine (S2U-RNA) to 2-selenouridine (Se2U-RNA). Acts in a two-step process involving geranylation of 2-thiouridine (S2U) to S-geranyl-2-thiouridine (geS2U) and subsequent selenation of the latter derivative to 2-selenouridine (Se2U) in the tRNA chain. This Pseudomonas fluorescens (strain Pf0-1) protein is tRNA 2-selenouridine synthase.